We begin with the raw amino-acid sequence, 378 residues long: Cytochrome b (378 aa).

A run of 4 helical transmembrane segments spans residues 32–52, 76–97, 112–132, and 177–197; these read FGSL…FLAM, WLIR…FLHV, WNIG…GYVL, and FFAF…VHLL. The heme b site is built by histidine 82 and histidine 96. Positions 181 and 195 each coordinate heme b. Residue histidine 200 participates in a ubiquinone binding. Transmembrane regions (helical) follow at residues 225-245, 287-307, 319-339, and 346-366; these read IKDA…VLFF, LGGV…PILH, LSQC…WIGG, and FITI…FALP.

Belongs to the cytochrome b family. As to quaternary structure, the cytochrome bc1 complex contains 11 subunits: 3 respiratory subunits (MT-CYB, CYC1 and UQCRFS1), 2 core proteins (UQCRC1 and UQCRC2) and 6 low-molecular weight proteins (UQCRH/QCR6, UQCRB/QCR7, UQCRQ/QCR8, UQCR10/QCR9, UQCR11/QCR10 and a cleavage product of UQCRFS1). This cytochrome bc1 complex then forms a dimer. Requires heme b as cofactor.

The protein resides in the mitochondrion inner membrane. In terms of biological role, component of the ubiquinol-cytochrome c reductase complex (complex III or cytochrome b-c1 complex) that is part of the mitochondrial respiratory chain. The b-c1 complex mediates electron transfer from ubiquinol to cytochrome c. Contributes to the generation of a proton gradient across the mitochondrial membrane that is then used for ATP synthesis. The protein is Cytochrome b (MT-CYB) of Sciurus aberti (Abert's squirrel).